The primary structure comprises 443 residues: Probable glycine dehydrogenase (decarboxylating) subunit 1 (443 aa).

This sequence belongs to the GcvP family. N-terminal subunit subfamily. As to quaternary structure, the glycine cleavage system is composed of four proteins: P, T, L and H. In this organism, the P 'protein' is a heterodimer of two subunits.

It catalyses the reaction N(6)-[(R)-lipoyl]-L-lysyl-[glycine-cleavage complex H protein] + glycine + H(+) = N(6)-[(R)-S(8)-aminomethyldihydrolipoyl]-L-lysyl-[glycine-cleavage complex H protein] + CO2. Functionally, the glycine cleavage system catalyzes the degradation of glycine. The P protein binds the alpha-amino group of glycine through its pyridoxal phosphate cofactor; CO(2) is released and the remaining methylamine moiety is then transferred to the lipoamide cofactor of the H protein. The polypeptide is Probable glycine dehydrogenase (decarboxylating) subunit 1 (Maridesulfovibrio salexigens (strain ATCC 14822 / DSM 2638 / NCIMB 8403 / VKM B-1763) (Desulfovibrio salexigens)).